We begin with the raw amino-acid sequence, 149 residues long: MHHTSMGIKMESQIQVFVFVFLWLSGVDGDIVMTQFAGVDGDIVMTQSHKFMSTSVGDRVSITCKASQDVSTTVAWYQQKPGQSPKLLIYSASYRYTGVPDRFTGSGSGTDFTFTISSVQAEDLAVYYCQQHYSTPPTFGGGTKLEIKR.

Positions 1 to 29 (MHHTSMGIKMESQIQVFVFVFLWLSGVDG) are cleaved as a signal peptide. 2 repeats span residues 26-35 (GVDGDIVMTQ) and 38-47 (GVDGDIVMTQ). The interval 42 to 64 (DIVMTQSHKFMSTSVGDRVSITC) is framework-1. The complementarity-determining-1 stretch occupies residues 65–75 (KASQDVSTTVA). The segment at 76 to 90 (WYQQKPGQSPKLLIY) is framework-2. The complementarity-determining-2 stretch occupies residues 91–97 (SASYRYT). The segment at 98-129 (GVPDRFTGSGSGTDFTFTISSVQAEDLAVYYC) is framework-3. The tract at residues 130-138 (QQHYSTPPT) is complementarity-determining-3. The segment at 139 to 148 (FGGGTKLEIK) is framework-4.

This is Immunoglobulin kappa chain variable 6-17 from Mus musculus (Mouse).